Here is a 427-residue protein sequence, read N- to C-terminus: UDP-N-acetylglucosamine 1-carboxyvinyltransferase (427 aa).

Residue 24–25 (KN) participates in phosphoenolpyruvate binding. UDP-N-acetyl-alpha-D-glucosamine is bound at residue Arg95. Residue Cys119 is the Proton donor of the active site. Cys119 carries the post-translational modification 2-(S-cysteinyl)pyruvic acid O-phosphothioketal. Residues 124 to 128 (RPVDQ), Asp308, and Val330 contribute to the UDP-N-acetyl-alpha-D-glucosamine site.

Belongs to the EPSP synthase family. MurA subfamily.

The protein resides in the cytoplasm. It carries out the reaction phosphoenolpyruvate + UDP-N-acetyl-alpha-D-glucosamine = UDP-N-acetyl-3-O-(1-carboxyvinyl)-alpha-D-glucosamine + phosphate. It functions in the pathway cell wall biogenesis; peptidoglycan biosynthesis. Cell wall formation. Adds enolpyruvyl to UDP-N-acetylglucosamine. The sequence is that of UDP-N-acetylglucosamine 1-carboxyvinyltransferase from Deinococcus geothermalis (strain DSM 11300 / CIP 105573 / AG-3a).